Consider the following 371-residue polypeptide: Queuine tRNA-ribosyltransferase (371 aa).

Asp90 serves as the catalytic Proton acceptor. Substrate contacts are provided by residues 90-94, Asp144, Gln189, and Gly215; that span reads DSGGF. Residues 246-252 are RNA binding; it reads GVGTPEN. Asp265 serves as the catalytic Nucleophile. The segment at 270–274 is RNA binding; important for wobble base 34 recognition; sequence TRNAR. Positions 303, 305, 308, and 334 each coordinate Zn(2+).

This sequence belongs to the queuine tRNA-ribosyltransferase family. As to quaternary structure, homodimer. Within each dimer, one monomer is responsible for RNA recognition and catalysis, while the other monomer binds to the replacement base PreQ1. It depends on Zn(2+) as a cofactor.

The catalysed reaction is 7-aminomethyl-7-carbaguanine + guanosine(34) in tRNA = 7-aminomethyl-7-carbaguanosine(34) in tRNA + guanine. It functions in the pathway tRNA modification; tRNA-queuosine biosynthesis. Its function is as follows. Catalyzes the base-exchange of a guanine (G) residue with the queuine precursor 7-aminomethyl-7-deazaguanine (PreQ1) at position 34 (anticodon wobble position) in tRNAs with GU(N) anticodons (tRNA-Asp, -Asn, -His and -Tyr). Catalysis occurs through a double-displacement mechanism. The nucleophile active site attacks the C1' of nucleotide 34 to detach the guanine base from the RNA, forming a covalent enzyme-RNA intermediate. The proton acceptor active site deprotonates the incoming PreQ1, allowing a nucleophilic attack on the C1' of the ribose to form the product. After dissociation, two additional enzymatic reactions on the tRNA convert PreQ1 to queuine (Q), resulting in the hypermodified nucleoside queuosine (7-(((4,5-cis-dihydroxy-2-cyclopenten-1-yl)amino)methyl)-7-deazaguanosine). This Helicobacter acinonychis (strain Sheeba) protein is Queuine tRNA-ribosyltransferase.